Here is a 129-residue protein sequence, read N- to C-terminus: uncharacterized protein (129 aa).

Basic and acidic residues predominate over residues 91–114 (ASEKVGEMKEAASEKASEMKEAVS). A disordered region spans residues 91 to 129 (ASEKVGEMKEAASEKASEMKEAVSEKATQAVDAVKEATK).

Belongs to the LEA type 1 family.

This is an uncharacterized protein from Haemophilus influenzae (strain ATCC 51907 / DSM 11121 / KW20 / Rd).